The chain runs to 194 residues: Adenylate kinase (194 aa).

G10–T15 is an ATP binding site. An NMP region spans residues S30–V59. AMP-binding positions include T31, R36, Q57–V59, G85–R88, and Q92. The tract at residues S126–D142 is LID. Residue R127 participates in ATP binding. AMP is bound by residues R139 and R150. A178 serves as a coordination point for ATP.

This sequence belongs to the adenylate kinase family. As to quaternary structure, monomer.

The protein localises to the cytoplasm. It catalyses the reaction AMP + ATP = 2 ADP. It functions in the pathway purine metabolism; AMP biosynthesis via salvage pathway; AMP from ADP: step 1/1. Functionally, catalyzes the reversible transfer of the terminal phosphate group between ATP and AMP. Plays an important role in cellular energy homeostasis and in adenine nucleotide metabolism. The chain is Adenylate kinase from Brucella abortus (strain S19).